A 459-amino-acid polypeptide reads, in one-letter code: Cyclic GMP-AMP synthase-like receptor 2 (459 aa).

Residues serine 68 and 79–81 contribute to the ATP site; that span reads EFD. Mg(2+) is bound by residues glutamate 79, aspartate 81, and aspartate 199. GTP contacts are provided by residues aspartate 199 and 248 to 255; that span reads RSSFYAVE. ATP is bound at residue 252–255; the sequence is YAVE. Histidine 263 contributes to the Zn(2+) binding site. Residues lysine 274 and 288–292 contribute to the ATP site; that span reads SYYIK.

Belongs to the mab-21 family. Requires Mg(2+) as cofactor. The cofactor is Mn(2+).

The enzyme catalyses GTP + ATP = 3',2'-cGAMP + 2 diphosphate. It carries out the reaction GTP + ATP = 2',3'-cGAMP + 2 diphosphate. The catalysed reaction is GTP + ATP = pppGp(2'-5')A + diphosphate. It catalyses the reaction pppA(2'-5')pG = 3',2'-cGAMP + diphosphate. The enzyme catalyses pppGp(2'-5')A = 2',3'-cGAMP + diphosphate. Its activity is regulated as follows. The enzyme activity is specifically activated by some nucleic acid. Its function is as follows. Nucleotidyltransferase that catalyzes the formation of cyclic GMP-AMP from ATP and GTP and plays a key role in antiviral innate immunity. Directly binds some unknown nucleic acid, activating the nucleotidyltransferase activity, leading to synthesis of both 3',2'-cGAMP and 2',3'-cGAMP second messengers. 3',2'-cGAMP and 2',3'-cGAMP bind to and activate Sting, thereby triggering the antiviral immune response via activation of the NF-kappa-B transcription factor Rel (Relish). The protein is Cyclic GMP-AMP synthase-like receptor 2 of Drosophila melanogaster (Fruit fly).